The chain runs to 192 residues: Cell division protein SepF (192 aa).

The disordered stretch occupies residues 154–192 (QEEPAPSNVTTTTQQSEETISESVTAPEPAWGTPVASAI). A compositionally biased stretch (low complexity) spans 162 to 178 (VTTTTQQSEETISESVT).

This sequence belongs to the SepF family. As to quaternary structure, homodimer. Interacts with FtsZ.

It is found in the cytoplasm. Cell division protein that is part of the divisome complex and is recruited early to the Z-ring. Probably stimulates Z-ring formation, perhaps through the cross-linking of FtsZ protofilaments. Its function overlaps with FtsA. The sequence is that of Cell division protein SepF from Prochlorococcus marinus (strain MIT 9211).